The following is a 703-amino-acid chain: Protein CNGC15c (703 aa).

Basic and acidic residues predominate over residues 1 to 10; that stretch reads MGFDNPRSER. The tract at residues 1–23 is disordered; that stretch reads MGFDNPRSERFEDDPEISKIPTT. Transmembrane regions (helical) follow at residues 91–111, 179–199, 216–236, 255–275, and 372–392; these read IFLV…YLPV, GFWL…WIII, FFII…SSQI, LMLY…LSIE, and FIGE…LFAL. Residue 480–565 participates in a nucleoside 3',5'-cyclic phosphate binding; it reads LFDQMDERML…WALDPRPSVI (86 aa). The IQ domain maps to 616-644; it reads RTWAACFIQAAWRRHKKRKEAAELRAKEN. Residues 676–703 are disordered; that stretch reads KGVNMHSGTNSGVVSSLQKPTEPDFSDE. The segment covering 681-694 has biased composition (polar residues); that stretch reads HSGTNSGVVSSLQK.

It belongs to the cyclic nucleotide-gated cation channel (TC 1.A.1.5) family. In terms of assembly, interacts (via N-terminus) with DMI1 (via c-terminus). The Nod factor has no effect on this interaction, implying that the complex is maintained after activation. As to expression, expressed in roots, stems, leaves, flowers and pods.

Its subcellular location is the nucleus membrane. Functionally, cyclic nucleotide-gated channel involved in the establishment of both rhizobial and mycorrhizal associations. Required for full activation of nuclear-localized Ca(2+) oscillations by Nod and Myc factors. Simultaneous activation of the K(+)-permeable channel DMI1 and the Ca(2+) channel CNGC15 can give rise to sustained Ca(2+) oscillations. May function during fertilization in both female and male gametophytic Ca(2+) signaling. The polypeptide is Protein CNGC15c (Medicago truncatula (Barrel medic)).